A 282-amino-acid polypeptide reads, in one-letter code: Bifunctional protein FolD (282 aa).

Residues 165 to 167, Ser190, and Thr231 contribute to the NADP(+) site; that span reads GRS.

It belongs to the tetrahydrofolate dehydrogenase/cyclohydrolase family. In terms of assembly, homodimer.

It catalyses the reaction (6R)-5,10-methylene-5,6,7,8-tetrahydrofolate + NADP(+) = (6R)-5,10-methenyltetrahydrofolate + NADPH. It carries out the reaction (6R)-5,10-methenyltetrahydrofolate + H2O = (6R)-10-formyltetrahydrofolate + H(+). It functions in the pathway one-carbon metabolism; tetrahydrofolate interconversion. In terms of biological role, catalyzes the oxidation of 5,10-methylenetetrahydrofolate to 5,10-methenyltetrahydrofolate and then the hydrolysis of 5,10-methenyltetrahydrofolate to 10-formyltetrahydrofolate. The chain is Bifunctional protein FolD from Clostridium botulinum (strain Alaska E43 / Type E3).